Reading from the N-terminus, the 292-residue chain is ABC transporter ATP-binding protein YtrB (292 aa).

The ABC transporter domain occupies 2–227 (IELRQLSKAI…YIKIQMAFDT (226 aa)). 34-41 (GRNGSGKT) contacts ATP.

This sequence belongs to the ABC transporter superfamily. In terms of assembly, the complex is composed of 2 ATP-binding proteins (YtrB and YtrE), 2 transmembrane proteins (YtrC and YtrD) and a solute-binding protein (YtrF).

It is found in the cell membrane. Its function is as follows. Part of the ABC transporter complex YtrBCDEF that plays a role in acetoin utilization during stationary phase and sporulation. The protein is ABC transporter ATP-binding protein YtrB (ytrB) of Bacillus subtilis (strain 168).